The primary structure comprises 451 residues: UDP-N-acetylmuramate--L-alanine ligase (451 aa).

Residue 110 to 116 (GTHGKTT) participates in ATP binding.

The protein belongs to the MurCDEF family.

It is found in the cytoplasm. The enzyme catalyses UDP-N-acetyl-alpha-D-muramate + L-alanine + ATP = UDP-N-acetyl-alpha-D-muramoyl-L-alanine + ADP + phosphate + H(+). The protein operates within cell wall biogenesis; peptidoglycan biosynthesis. Its function is as follows. Cell wall formation. The sequence is that of UDP-N-acetylmuramate--L-alanine ligase from Francisella tularensis subsp. tularensis (strain SCHU S4 / Schu 4).